Consider the following 491-residue polypeptide: Probable cysteine proteinase 024R (491 aa).

Catalysis depends on residues C132, H325, and N355. A helical membrane pass occupies residues 467–487 (ALDLALLVLPALLIVIVVLIG).

This sequence belongs to the peptidase C1 family.

It is found in the membrane. In terms of biological role, probable cysteine protease. The polypeptide is Probable cysteine proteinase 024R (Invertebrate iridescent virus 3 (IIV-3)).